A 989-amino-acid chain; its full sequence is Vacuolar membrane protease (989 aa).

Residues 1 to 25 (MDRQSLRTTLRAMDASNENGSAKGA) form a disordered region. The Cytoplasmic portion of the chain corresponds to 1-41 (MDRQSLRTTLRAMDASNENGSAKGAKKTTIGSFVRWTFGFN). The helical transmembrane segment at 42 to 62 (SVPLTTLVTITTVLLGLLVYV) threads the bilayer. The Vacuolar portion of the chain corresponds to 63 to 383 (STSVNPPDVT…YLFIILPLQY (321 aa)). Residues histidine 181 and aspartate 193 each coordinate Zn(2+). Glutamate 227 (proton acceptor) is an active-site residue. Glutamate 228 contacts Zn(2+). The N-linked (GlcNAc...) asparagine glycan is linked to asparagine 245. 2 residues coordinate Zn(2+): glutamate 253 and histidine 325. The helical transmembrane segment at 384–404 (IFVISCLTLAVGPIFVGFLFL) threads the bilayer. Over 405-426 (LVLRKQINAGTSETILGGWLRS) the chain is Cytoplasmic. The chain crosses the membrane as a helical span at residues 427–447 (IVSVLVSVVATYFVVETLHLG). The Vacuolar portion of the chain corresponds to 448-460 (NELYVVRSFYTPL). A helical transmembrane segment spans residues 461–481 (FAGLGTFIFVNYVLLGFFHFV). Over 482-488 (RPVCDQK) the chain is Cytoplasmic. The helical transmembrane segment at 489 to 509 (LIILLELSVVLWVLLLLSVIH) threads the bilayer. Residues 510–520 (EATHKATGEYH) are Vacuolar-facing. Residues 521 to 541 (FLILYIVVATASILGLFGHLV) traverse the membrane as a helical segment. Topologically, residues 542–611 (TSTETSTFVE…IAVSMGYDWS (70 aa)) are cytoplasmic. The tract at residues 548–576 (TFVEGPEDEEDTVDASEATETSPLLPEAS) is disordered. Positions 552-561 (GPEDEEDTVD) are enriched in acidic residues. The chain crosses the membrane as a helical span at residues 612 to 632 (IQFLLVVPITFFVTFGLAASL). The Vacuolar segment spans residues 633-648 (LDGLHQTPLESEKSAD). A helical transmembrane segment spans residues 649–669 (FVYTTITAMSVLVGITFLPFV). The Cytoplasmic portion of the chain corresponds to 670–673 (HKLQ). The helical transmembrane segment at 674 to 694 (VFVPIVVVGVAVTASFVHILS) threads the bilayer. Over 695 to 989 (PPFSSNAPAK…LVEVSKYVEL (295 aa)) the chain is Vacuolar. Asparagine 745, asparagine 793, and asparagine 822 each carry an N-linked (GlcNAc...) asparagine glycan.

This sequence belongs to the peptidase M28 family. Requires Zn(2+) as cofactor.

It is found in the vacuole membrane. May be involved in vacuolar sorting and osmoregulation. The sequence is that of Vacuolar membrane protease from Yarrowia lipolytica (strain CLIB 122 / E 150) (Yeast).